The sequence spans 487 residues: G-patch domain and KOW motifs-containing protein (487 aa).

Disordered regions lie at residues 65 to 121 (HKNR…PLLM), 181 to 232 (VKPL…TGSA), and 295 to 367 (KVHQ…RPEP). A coiled-coil region spans residues 88–116 (AVLSQAVKELIEESRRAQEDNSETNQTLS). Basic and acidic residues-rich tracts occupy residues 96-106 (ELIEESRRAQE) and 200-209 (SALKHLEPQK). Positions 154 to 200 (VQQYGMAMLRGMGWKEGEGIGRTFKQDVKPLEQKLRPKGLGLGADRS) constitute a G-patch domain. In terms of domain architecture, KOW 1 spans 226-253 (GLGTGSAVQIQSGAYKDMYGKVEGIDPD). Composition is skewed to basic and acidic residues over residues 295 to 333 (KVHQ…DVKL) and 352 to 367 (RSPE…RPEP). The 28-residue stretch at 428–455 (PKEEGEHVMVVLGKYRGMVGKILHRDKQ) folds into the KOW 2 domain.

Belongs to the MOS2 family. Component of the minor spliceosome, which splices U12-type introns.

The protein localises to the nucleus. Its function is as follows. RNA-binding protein involved in pre-mRNA splicing. This is G-patch domain and KOW motifs-containing protein (gpkow) from Xenopus laevis (African clawed frog).